A 240-amino-acid polypeptide reads, in one-letter code: Methylthioribulose-1-phosphate dehydratase (240 aa).

Over residues 1–10 (MAQEIEKTNN) the composition is skewed to basic and acidic residues. Residues 1–20 (MAQEIEKTNNDHLVQSSDPE) are disordered. Cys100 lines the substrate pocket. The Zn(2+) site is built by His117 and His119. The active-site Proton donor/acceptor is Glu146. His202 contacts Zn(2+).

The protein belongs to the aldolase class II family. MtnB subfamily. It depends on Zn(2+) as a cofactor.

The protein resides in the cytoplasm. It catalyses the reaction 5-(methylsulfanyl)-D-ribulose 1-phosphate = 5-methylsulfanyl-2,3-dioxopentyl phosphate + H2O. It functions in the pathway amino-acid biosynthesis; L-methionine biosynthesis via salvage pathway; L-methionine from S-methyl-5-thio-alpha-D-ribose 1-phosphate: step 2/6. Catalyzes the dehydration of methylthioribulose-1-phosphate (MTRu-1-P) into 2,3-diketo-5-methylthiopentyl-1-phosphate (DK-MTP-1-P). This is Methylthioribulose-1-phosphate dehydratase from Aspergillus fumigatus (strain CBS 144.89 / FGSC A1163 / CEA10) (Neosartorya fumigata).